A 191-amino-acid chain; its full sequence is Cdc42 homolog (191 aa).

GTP is bound at residue 10–17 (GDGAVGKT). The short motif at 32-40 (YVPTVFDNY) is the Effector region element. GTP contacts are provided by residues 57-61 (DTAGQ) and 115-118 (TQID). C188 is modified (cysteine methyl ester). A lipid anchor (S-geranylgeranyl cysteine) is attached at C188. Positions 189-191 (KFL) are cleaved as a propeptide — removed in mature form.

This sequence belongs to the small GTPase superfamily. Rho family. CDC42 subfamily.

It is found in the cell junction. It localises to the adherens junction. Its subcellular location is the cell membrane. Regulates mbt kinase activity and is also required to recruit mbt to adherens junctions. Together with mbt, regulates photoreceptor cell morphogenesis. This chain is Cdc42 homolog, found in Aedes aegypti (Yellowfever mosquito).